The chain runs to 57 residues: UPF0434 protein swp_2279 (57 aa).

It belongs to the UPF0434 family.

In Shewanella piezotolerans (strain WP3 / JCM 13877), this protein is UPF0434 protein swp_2279.